A 487-amino-acid chain; its full sequence is 3-octaprenyl-4-hydroxybenzoate carboxy-lyase (487 aa).

Asparagine 172 contacts Mn(2+). Prenylated FMN contacts are provided by residues 175–177, 189–191, and 194–195; these read IYR, RWL, and RG. Glutamate 238 contacts Mn(2+). Catalysis depends on aspartate 287, which acts as the Proton donor.

It belongs to the UbiD family. As to quaternary structure, homohexamer. Prenylated FMN is required as a cofactor. Mn(2+) serves as cofactor.

The protein resides in the cell membrane. The enzyme catalyses a 4-hydroxy-3-(all-trans-polyprenyl)benzoate + H(+) = a 2-(all-trans-polyprenyl)phenol + CO2. The protein operates within cofactor biosynthesis; ubiquinone biosynthesis. In terms of biological role, catalyzes the decarboxylation of 3-octaprenyl-4-hydroxy benzoate to 2-octaprenylphenol, an intermediate step in ubiquinone biosynthesis. In Nitrosococcus oceani (strain ATCC 19707 / BCRC 17464 / JCM 30415 / NCIMB 11848 / C-107), this protein is 3-octaprenyl-4-hydroxybenzoate carboxy-lyase.